The chain runs to 365 residues: Phospho-N-acetylmuramoyl-pentapeptide-transferase (365 aa).

10 helical membrane passes run 2–22 (ISLI…TPLL), 51–71 (TLGG…SALY), 80–100 (PSWS…LGFI), 118–138 (GKFI…LILP), 167–187 (VAIV…TNAI), 196–216 (LAAG…FWEF), 234–254 (PLDL…FLWY), 256–276 (SNPA…GLFA), 277–297 (AMSI…LFVI), and 340–360 (FWMI…GDWV).

Belongs to the glycosyltransferase 4 family. MraY subfamily. Mg(2+) is required as a cofactor.

Its subcellular location is the cell membrane. It catalyses the reaction UDP-N-acetyl-alpha-D-muramoyl-L-alanyl-gamma-D-glutamyl-meso-2,6-diaminopimeloyl-D-alanyl-D-alanine + di-trans,octa-cis-undecaprenyl phosphate = di-trans,octa-cis-undecaprenyl diphospho-N-acetyl-alpha-D-muramoyl-L-alanyl-D-glutamyl-meso-2,6-diaminopimeloyl-D-alanyl-D-alanine + UMP. The protein operates within cell wall biogenesis; peptidoglycan biosynthesis. In terms of biological role, catalyzes the initial step of the lipid cycle reactions in the biosynthesis of the cell wall peptidoglycan: transfers peptidoglycan precursor phospho-MurNAc-pentapeptide from UDP-MurNAc-pentapeptide onto the lipid carrier undecaprenyl phosphate, yielding undecaprenyl-pyrophosphoryl-MurNAc-pentapeptide, known as lipid I. This Bifidobacterium adolescentis (strain ATCC 15703 / DSM 20083 / NCTC 11814 / E194a) protein is Phospho-N-acetylmuramoyl-pentapeptide-transferase.